Reading from the N-terminus, the 347-residue chain is uncharacterized protein (347 aa).

The Cytoplasmic segment spans residues 1–44 (MWNPKKKSEALAKFKSFPYPKPGTSNVLDSKEGDTRRKYFTKTH). The chain crosses the membrane as a helical; Signal-anchor for type II membrane protein span at residues 45–62 (LHRLFVFVVLLLCSGYFL). The Lumenal portion of the chain corresponds to 63-347 (KHTLLTRPKE…RGWRKLVPFL (285 aa)).

Belongs to the glycosyltransferase 34 family.

The protein resides in the endoplasmic reticulum membrane. This is an uncharacterized protein from Schizosaccharomyces pombe (strain 972 / ATCC 24843) (Fission yeast).